The sequence spans 458 residues: ATP synthase subunit beta (458 aa).

148–155 (GGAGVGKT) contacts ATP.

This sequence belongs to the ATPase alpha/beta chains family. F-type ATPases have 2 components, CF(1) - the catalytic core - and CF(0) - the membrane proton channel. CF(1) has five subunits: alpha(3), beta(3), gamma(1), delta(1), epsilon(1). CF(0) has three main subunits: a(1), b(2) and c(9-12). The alpha and beta chains form an alternating ring which encloses part of the gamma chain. CF(1) is attached to CF(0) by a central stalk formed by the gamma and epsilon chains, while a peripheral stalk is formed by the delta and b chains.

The protein localises to the cell inner membrane. It catalyses the reaction ATP + H2O + 4 H(+)(in) = ADP + phosphate + 5 H(+)(out). Its function is as follows. Produces ATP from ADP in the presence of a proton gradient across the membrane. The catalytic sites are hosted primarily by the beta subunits. The protein is ATP synthase subunit beta of Shewanella loihica (strain ATCC BAA-1088 / PV-4).